Reading from the N-terminus, the 251-residue chain is uncharacterized protein (251 aa).

Disordered stretches follow at residues 1–92 (MGRP…PGSA) and 137–251 (KPTP…LRTH). The span at 69 to 92 (AEGAPALLGGSPSSGSPGHPPGSA) shows a compositional bias: low complexity. A compositionally biased stretch (polar residues) spans 155-172 (SESSWQLPQLPAGSTSGS).

This is an uncharacterized protein from Homo sapiens (Human).